The chain runs to 254 residues: MALQQSMAMPMMVVSGLGTAPRSSPMVQLQRMKKHLVVVAAFKSRTKASPKVDKSNKNKSIVEDGIFGTSGGIGFTKENELFVGRVAMLGFAASLLGEAVTGKGILAQLNLETGIPIYEAEPLLLFFILFTLLGAIGALGDRGRFVDDATGLERAVIPPGKGFRAALGLSEGGPLFGFTKANELFVGRLAQLGIAFSLIGEIITGKGALAQLNIETGVPINEIEPLLLFNILFFFFAAINPGTGKFVTDDNDDQ.

The transit peptide at 1–38 (MALQQSMAMPMMVVSGLGTAPRSSPMVQLQRMKKHLVV) directs the protein to the chloroplast. Tandem repeats lie at residues 42-148 (FKSR…FVDD) and 149-253 (ATGL…DNDD). 4 helical membrane-spanning segments follow: residues 86 to 106 (VAML…KGIL), 120 to 140 (AEPL…GALG), 184 to 204 (LFVG…EIIT), and 219 to 239 (PINE…FAAI).

It belongs to the ELIP/psbS family.

Its subcellular location is the plastid. It is found in the chloroplast thylakoid membrane. Its function is as follows. Involved in high light-mediated energy-dependent nonphotochemical quenching (NPQ, qE) and thermal dissipation (TD) thus regulating energy conversion in photosystem II and protecting from photoinhibition. Also seems to regulate quantum yield of electron transport in fluctuating light conditions. The polypeptide is Photosystem II 22 kDa protein 2, chloroplastic (Oryza sativa subsp. indica (Rice)).